Consider the following 236-residue polypeptide: Syntaxin-8 (236 aa).

Topologically, residues 1–215 (MAPDPWFSTY…LVDRKSASCG (215 aa)) are cytoplasmic. Residues 42 to 65 (LTIRTLLKNLKVKIDLLKDLLLRA) are a coiled coil. Phosphoserine is present on residues Ser-102 and Ser-160. The 63-residue stretch at 145–207 (QKIIQEQDAG…RTEARRVTLV (63 aa)) folds into the t-SNARE coiled-coil homology domain. The helical; Anchor for type IV membrane protein transmembrane segment at 216–232 (MIMVILLLLVAIVVVAV) threads the bilayer. The Vesicular segment spans residues 233–236 (WPTN).

This sequence belongs to the syntaxin family. In terms of assembly, part of the SNARE core complex containing STX7, VAMP8 and VTI1B. Interacts with VAMP8. Forms a SNARE complex with STX7, VTI1B and VAMP8 which functions in the homotypic fusion of late endosomes. Component of the SNARE complex composed of STX7, STX8, VAMP7 and VTI1B that is required for heterotypic fusion of late endosomes with lysosomes. Interacts with HECTD3. Interacts with TPC1. Post-translationally, ubiquitinated by HECTD3. Widely expressed in all tissues examined.

It localises to the membrane. Vesicle trafficking protein that functions in the early secretory pathway, possibly by mediating retrograde transport from cis-Golgi membranes to the ER. The polypeptide is Syntaxin-8 (Stx8) (Rattus norvegicus (Rat)).